The sequence spans 184 residues: NADH-quinone oxidoreductase subunit B (184 aa).

[4Fe-4S] cluster contacts are provided by C37, C38, C103, and C132.

It belongs to the complex I 20 kDa subunit family. In terms of assembly, NDH-1 is composed of 14 different subunits. Subunits NuoB, C, D, E, F, and G constitute the peripheral sector of the complex. [4Fe-4S] cluster serves as cofactor.

It localises to the cell membrane. The catalysed reaction is a quinone + NADH + 5 H(+)(in) = a quinol + NAD(+) + 4 H(+)(out). In terms of biological role, NDH-1 shuttles electrons from NADH, via FMN and iron-sulfur (Fe-S) centers, to quinones in the respiratory chain. The immediate electron acceptor for the enzyme in this species is believed to be a menaquinone. Couples the redox reaction to proton translocation (for every two electrons transferred, four hydrogen ions are translocated across the cytoplasmic membrane), and thus conserves the redox energy in a proton gradient. This Nocardia farcinica (strain IFM 10152) protein is NADH-quinone oxidoreductase subunit B.